We begin with the raw amino-acid sequence, 291 residues long: ATP synthase gamma chain (291 aa).

The protein belongs to the ATPase gamma chain family. In terms of assembly, F-type ATPases have 2 components, CF(1) - the catalytic core - and CF(0) - the membrane proton channel. CF(1) has five subunits: alpha(3), beta(3), gamma(1), delta(1), epsilon(1). CF(0) has three main subunits: a, b and c.

It is found in the cell membrane. Its function is as follows. Produces ATP from ADP in the presence of a proton gradient across the membrane. The gamma chain is believed to be important in regulating ATPase activity and the flow of protons through the CF(0) complex. In Streptococcus equi subsp. zooepidemicus (strain MGCS10565), this protein is ATP synthase gamma chain.